The sequence spans 105 residues: Large ribosomal subunit protein P2 (105 aa).

Belongs to the eukaryotic ribosomal protein P1/P2 family. P1 and P2 exist as dimers at the large ribosomal subunit. Post-translationally, phosphorylated.

In terms of biological role, plays an important role in the elongation step of protein synthesis. The polypeptide is Large ribosomal subunit protein P2 (LIP2) (Leishmania braziliensis).